Consider the following 2602-residue polypeptide: Filamin-B (2602 aa).

Positions 1 to 239 are actin-binding; sequence MPVTEKDLAE…VMTYLSQFPK (239 aa). 2 consecutive Calponin-homology (CH) domains span residues 16 to 122 and 139 to 242; these read KIQQ…LHYS and QTPK…KAKL. A Phosphothreonine modification is found at Thr-216. A disordered region spans residues 244–267; it reads PGAPLKPKLNPKKARAYGRGIEPT. Filamin repeat units follow at residues 249-347, 349-446, 447-543, 544-636, 640-736, 737-839, 840-938, 939-1034, 1035-1127, 1128-1222, 1223-1322, 1323-1415, 1416-1511, 1512-1608, and 1609-1704; these read KPKL…EVSV, KAQG…VVQV, GEAC…EVQV, GPEA…MAFI, TGGY…RVNI, GQGS…RVKV, DPSH…TVGV, AAPL…TVEA, SLPP…KADI, EMPF…RVKV, EPAV…KVAV, TEGC…RVPV, KDVV…KVKV, LPTY…RIRA, and TQTG…TVMA. The residue at position 519 (Thr-519) is a Phosphothreonine. Lys-681 carries the post-translational modification N6-acetyllysine. Ser-730 bears the Phosphoserine mark. Ser-886, Ser-932, Ser-983, and Ser-1028 each carry phosphoserine. An interaction with FBLP1 region spans residues 1128 to 1511; it reads EMPFDPSKVV…IPRSPFKVKV (384 aa). Thr-1307 is subject to Phosphothreonine. Ser-1316 carries the post-translational modification Phosphoserine. Ser-1433, Asn-1474, Ser-1505, and Ser-1602 each carry phosphoserine. The segment at 1705-1728 is hinge 1; that stretch reads TDGEVTAVEEAPVNACPPGFRPWV. 8 Filamin repeats span residues 1729–1813, 1816–1908, 1919–1994, 1997–2089, 2091–2185, 2188–2280, 2282–2375, and 2379–2471; these read TEEA…SPLQ, VNYP…TAKI, KLGS…SIMV, SEIG…TVKI, GEGR…QFTV, LGEG…LVPV, APSD…KVRV, and GQAG…KAKV. N6-acetyllysine is present on Lys-1780. The interval 1862–2148 is interaction with the cytoplasmic tail of GP1BA; the sequence is SKAEISCIDN…RVTEAEIVPM (287 aa). Residues 2060-2225 are interaction with FLNA 1; that stretch reads SYFPTVPGVY…IWTREAGAGG (166 aa). Phosphoserine is present on residues Ser-2083, Ser-2107, and Ser-2113. The interval 2130–2602 is interaction with INPPL1; sequence SAHVTSPSGR…PGSPFHVTVP (473 aa). Phosphoserine is present on residues Ser-2369 and Ser-2465. Lys-2468 is covalently cross-linked (Glycyl lysine isopeptide (Lys-Gly) (interchain with G-Cter in ISG15)). Positions 2472–2506 are hinge 2; the sequence is TGQRLVSPGSANETSSILVESVTRSSTETCYSAIP. Positions 2472-2602 are self-association site, tail; sequence TGQRLVSPGS…PGSPFHVTVP (131 aa). 3 positions are modified to phosphoserine: Ser-2478, Ser-2481, and Ser-2492. The Filamin 24 repeat unit spans residues 2507–2601; that stretch reads KASSDASKVT…IPGSPFHVTV (95 aa). The segment at 2507 to 2602 is interaction with FLNA 2; that stretch reads KASSDASKVT…PGSPFHVTVP (96 aa). N6-succinyllysine occurs at positions 2518 and 2524. The residue at position 2576 (Lys-2576) is an N6-acetyllysine.

Belongs to the filamin family. Homodimer. Interacts with MICALL2. Interacts with RFLNA and RFLNB. Isoform 1 interacts with FBLP1, FLNA, FLNC, GP1BA, INPPL1, ITGB1A, PSEN1 and PSEN2. Isoform 3 interacts with ITGB1A, ITGB1D, ITGB3 and ITGB6. Interacts with MYOT and MYOZ1. Interacts with HBV capsid protein. Interacts with ASB2 isoform 1; the interaction targets FLNB for proteasomal degradation. In terms of processing, ISGylation prevents ability to interact with the upstream activators of the JNK cascade and inhibits IFNA-induced JNK signaling. Ubiquitination by a SCF-like complex containing ASB2 isoform 1 leads to proteasomal degradation which promotes muscle differentiation. As to expression, ubiquitous. Isoform 1 and isoform 2 are expressed in placenta, bone marrow, brain, umbilical vein endothelial cells (HUVEC), retina and skeletal muscle. Isoform 1 is predominantly expressed in prostate, uterus, liver, thyroid, stomach, lymph node, small intestine, spleen, skeletal muscle, kidney, placenta, pancreas, heart, lung, platelets, endothelial cells, megakaryocytic and erythroleukemic cell lines. Isoform 2 is predominantly expressed in spinal cord, platelet and Daudi cells. Also expressed in thyroid adenoma, neurofibrillary tangles (NFT), senile plaques in the hippocampus and cerebral cortex in Alzheimer disease (AD). Isoform 3 and isoform 6 are expressed predominantly in lung, heart, skeletal muscle, testis, spleen, thymus and leukocytes. Isoform 4 and isoform 5 are expressed in heart.

The protein localises to the cytoplasm. The protein resides in the cell cortex. It localises to the cytoskeleton. It is found in the stress fiber. Its subcellular location is the myofibril. The protein localises to the sarcomere. The protein resides in the z line. Functionally, connects cell membrane constituents to the actin cytoskeleton. May promote orthogonal branching of actin filaments and links actin filaments to membrane glycoproteins. Anchors various transmembrane proteins to the actin cytoskeleton. Interaction with FLNA may allow neuroblast migration from the ventricular zone into the cortical plate. Various interactions and localizations of isoforms affect myotube morphology and myogenesis. Isoform 6 accelerates muscle differentiation in vitro. In Homo sapiens (Human), this protein is Filamin-B (FLNB).